The sequence spans 350 residues: MAGLQGGFTTGACAAAAAKMAAALLCGEAISERISIPLLDGTRESLPLAYAHRLPDGAEAAVYKNAGDDPDVTNGALIIARVVASDKPLEFRAGEGVGIITKPGLALPPGEPAINPGPRLMIESAVREVTDRGLRVTIAIPDGKQLAERTFNPRLGIKGGISVLGTTGRVRPFSLEAVRKTMECSYNVACASGVRHPVLVPGHIGERAAHRHFQVTQEQVVEAGNEWGFMIDLVAQTPPSALLVLGHPGKLAKLPLGHWDTHSSRSASPVPSVRELATRILECPVAESTTVEGVFADLTAEQRQCLGDTLARALQIAVSHRLDHRAPVATALINLAGDMLGSCGDLTPWQ.

The protein belongs to the CbiD family.

The catalysed reaction is Co-precorrin-5B + S-adenosyl-L-methionine = Co-precorrin-6A + S-adenosyl-L-homocysteine. Its pathway is cofactor biosynthesis; adenosylcobalamin biosynthesis; cob(II)yrinate a,c-diamide from sirohydrochlorin (anaerobic route): step 6/10. Functionally, catalyzes the methylation of C-1 in cobalt-precorrin-5B to form cobalt-precorrin-6A. In Syntrophotalea carbinolica (strain DSM 2380 / NBRC 103641 / GraBd1) (Pelobacter carbinolicus), this protein is Cobalt-precorrin-5B C(1)-methyltransferase.